The chain runs to 317 residues: tRNA dimethylallyltransferase (317 aa).

14 to 21 (GPTAVGKT) is a binding site for ATP. 16–21 (TAVGKT) provides a ligand contact to substrate. An interaction with substrate tRNA region spans residues 39–42 (DSMQ).

Belongs to the IPP transferase family. As to quaternary structure, monomer. Mg(2+) is required as a cofactor.

It catalyses the reaction adenosine(37) in tRNA + dimethylallyl diphosphate = N(6)-dimethylallyladenosine(37) in tRNA + diphosphate. Its function is as follows. Catalyzes the transfer of a dimethylallyl group onto the adenine at position 37 in tRNAs that read codons beginning with uridine, leading to the formation of N6-(dimethylallyl)adenosine (i(6)A). The sequence is that of tRNA dimethylallyltransferase from Bacillus cereus (strain ATCC 14579 / DSM 31 / CCUG 7414 / JCM 2152 / NBRC 15305 / NCIMB 9373 / NCTC 2599 / NRRL B-3711).